Reading from the N-terminus, the 374-residue chain is Queuine tRNA-ribosyltransferase (374 aa).

Asp90 serves as the catalytic Proton acceptor. Substrate is bound by residues 90–94 (DSGGF), Asp144, Gln193, and Gly220. Residues 251–257 (GVGTPED) form an RNA binding region. Residue Asp270 is the Nucleophile of the active site. Residues 275 to 279 (TRNAR) are RNA binding; important for wobble base 34 recognition. Residues Cys308, Cys310, Cys313, and His339 each contribute to the Zn(2+) site.

This sequence belongs to the queuine tRNA-ribosyltransferase family. In terms of assembly, homodimer. Within each dimer, one monomer is responsible for RNA recognition and catalysis, while the other monomer binds to the replacement base PreQ1. Zn(2+) is required as a cofactor.

The enzyme catalyses 7-aminomethyl-7-carbaguanine + guanosine(34) in tRNA = 7-aminomethyl-7-carbaguanosine(34) in tRNA + guanine. Its pathway is tRNA modification; tRNA-queuosine biosynthesis. Catalyzes the base-exchange of a guanine (G) residue with the queuine precursor 7-aminomethyl-7-deazaguanine (PreQ1) at position 34 (anticodon wobble position) in tRNAs with GU(N) anticodons (tRNA-Asp, -Asn, -His and -Tyr). Catalysis occurs through a double-displacement mechanism. The nucleophile active site attacks the C1' of nucleotide 34 to detach the guanine base from the RNA, forming a covalent enzyme-RNA intermediate. The proton acceptor active site deprotonates the incoming PreQ1, allowing a nucleophilic attack on the C1' of the ribose to form the product. After dissociation, two additional enzymatic reactions on the tRNA convert PreQ1 to queuine (Q), resulting in the hypermodified nucleoside queuosine (7-(((4,5-cis-dihydroxy-2-cyclopenten-1-yl)amino)methyl)-7-deazaguanosine). This chain is Queuine tRNA-ribosyltransferase, found in Campylobacter fetus subsp. fetus (strain 82-40).